We begin with the raw amino-acid sequence, 75 residues long: ATP synthase subunit epsilon, mitochondrial (75 aa).

A mitochondrion-targeting transit peptide spans 1-9; it reads MIRRSCALL.

Belongs to the eukaryotic ATPase epsilon family. As to quaternary structure, F-type ATPases have 2 components, F(1) - the catalytic core - and F(o) - the membrane proton channel. F(1) has five subunits: alpha(3), beta(3), gamma(1), delta(1), epsilon(1), plus the additional subunit P18 (Tb427.05.1710) that is not present in F(1)F(o) ATP synthase from metazoa. Subunit P18 (Tb927.5.1710) interacts with the alpha subunit with a 1:1 stoichiometry; the interaction is direct. Subunit gamma is part of the central stalk. F(o) has three main subunits: a, b and c. The trypanosomal ATPase complex contains additional subunits that are not present in the F(1)F(o) ATP synthase from metazoa.

It localises to the mitochondrion. The protein localises to the mitochondrion inner membrane. Its function is as follows. Mitochondrial membrane ATP synthase (F(1)F(o) ATP synthase) produces ATP from ADP in the presence of a proton gradient across the membrane which is generated by electron transport complexes of the respiratory chain. F-type ATPases consist of two structural domains, F(1) - containing the extramembraneous catalytic core, and F(o) - containing the membrane proton channel, linked together by a central stalk and a peripheral stalk. During catalysis, ATP synthesis in the catalytic domain of F(1) is coupled via a rotary mechanism of the central stalk subunits to proton translocation. Subunits alpha and beta form the catalytic core in F(1). Rotation of the central stalk against the surrounding alpha(3)beta(3) subunits leads to hydrolysis of ATP in three separate catalytic sites on the beta subunits. Contrary to the procyclic, insect form that requires F(1)F(o) ATP synthase for ATP synthesis, the bloodstream form relies on ATP hydrolysis by F(1)F(o) ATP synthase to maintain its mitochondrial membrane potential. This Trypanosoma brucei brucei protein is ATP synthase subunit epsilon, mitochondrial.